Reading from the N-terminus, the 498-residue chain is ATP synthase subunit beta, chloroplastic (498 aa).

172-179 provides a ligand contact to ATP; the sequence is GGAGVGKT.

The protein belongs to the ATPase alpha/beta chains family. In terms of assembly, F-type ATPases have 2 components, CF(1) - the catalytic core - and CF(0) - the membrane proton channel. CF(1) has five subunits: alpha(3), beta(3), gamma(1), delta(1), epsilon(1). CF(0) has four main subunits: a(1), b(1), b'(1) and c(9-12).

Its subcellular location is the plastid. The protein resides in the chloroplast thylakoid membrane. The catalysed reaction is ATP + H2O + 4 H(+)(in) = ADP + phosphate + 5 H(+)(out). Produces ATP from ADP in the presence of a proton gradient across the membrane. The catalytic sites are hosted primarily by the beta subunits. The protein is ATP synthase subunit beta, chloroplastic of Lemna minor (Common duckweed).